Consider the following 130-residue polypeptide: Small ribosomal subunit protein uS9 (130 aa).

The disordered stretch occupies residues 104–130; sequence LTRDPRMKERKKYGLKKARRAPQFSKR. Positions 111–130 are enriched in basic residues; sequence KERKKYGLKKARRAPQFSKR.

This sequence belongs to the universal ribosomal protein uS9 family.

The chain is Small ribosomal subunit protein uS9 from Ruminiclostridium cellulolyticum (strain ATCC 35319 / DSM 5812 / JCM 6584 / H10) (Clostridium cellulolyticum).